The primary structure comprises 221 residues: Small ribosomal subunit protein uS5 (221 aa).

The tract at residues 1-40 (MMAQRNSGAPDNAGGSNDGREGGRGRRDNRDDRRGGRDNA) is disordered. Positions 18–40 (DGREGGRGRRDNRDDRRGGRDNA) are enriched in basic and acidic residues. An S5 DRBM domain is found at 45 to 108 (YLERVVTINR…DEARKNFFRV (64 aa)).

The protein belongs to the universal ribosomal protein uS5 family. Part of the 30S ribosomal subunit. Contacts proteins S4 and S8.

Functionally, with S4 and S12 plays an important role in translational accuracy. Located at the back of the 30S subunit body where it stabilizes the conformation of the head with respect to the body. The polypeptide is Small ribosomal subunit protein uS5 (Mycobacteroides abscessus (strain ATCC 19977 / DSM 44196 / CCUG 20993 / CIP 104536 / JCM 13569 / NCTC 13031 / TMC 1543 / L948) (Mycobacterium abscessus)).